The chain runs to 1349 residues: Periaxin (1349 aa).

At Ser-7 the chain carries Phosphoserine. Positions 16–99 (LVEIIVETEA…YKVSFCLKRT (84 aa)) constitute a PDZ domain. A Nuclear export signal motif is present at residues 70-84 (VFFENFKYEDALRLL). Phosphoserine is present on Ser-133. 41 repeat units span residues 402–406 (PPEVK), 410–414 (GPEVK), 418–422 (VPEVK), 426–430 (MPEPV), 431–435 (LPEVR), 436–440 (LPEVE), 444–448 (VSEMK), 452–456 (VPEMA), 457–461 (VPEVR), 462–466 (LPEVQ), 467–471 (LPKVP), 472–476 (EMKLP), 477–481 (EVKLP), 485–489 (EMAVP), 493–497 (LPEVQ), 501–505 (VPEMK), 506–510 (LPEVK), 514–518 (VPEMA), 519–523 (VPEVR), 524–528 (LPEVQ), 532–536 (VPEMK), 537–549 (LPKV…PEMK), 553–557 (VPEMA), 558–562 (VPEVR), 563–567 (LPEVQ), 571–575 (VPEVK), 576–580 (LPEVK), 589–593 (VPEMA), 594–598 (VPEVH), 599–603 (LPEVQ), 612–616 (VPDVK), 617–621 (LPEVK), 622–626 (LPEIK), 630–634 (VPEMV), 635–639 (VPDVH), 643–647 (VHLPK), 648–652 (VSEMR), 653–657 (LPEVQ), 661–665 (VPEVH), 669–673 (APEVK), and 674–678 (LPKAP). A 41 X 5 AA approximate tandem repeats of [LVMGIE]-[PSM]-[EDKA]-[LIVMA]-[AQKHPRT]; that may have a tripeptide spacer of [ALKD]-[IPV]-[KPH] region spans residues 402–678 (PPEVKVPKGP…APEVKLPKAP (277 aa)). Phosphoserine is present on residues Ser-794 and Ser-974. Residues 1207-1218 (AKEGAEEGEKAK) show a composition bias toward basic and acidic residues. Positions 1207–1349 (AKEGAEEGEK…RMEGAQAAVI (143 aa)) are disordered. Residues 1232–1242 (SEAVSGEGSPS) show a composition bias toward low complexity. Residues Ser-1236, Ser-1240, Ser-1242, Ser-1289, Ser-1295, and Ser-1327 each carry the phosphoserine modification.

This sequence belongs to the periaxin family. Homodimer (via PDZ domain). Interacts with SCN10A. Found in a complex with SCN10A. Interacts with DRP2. Identified in a dystroglycan complex that contains at least PRX, DRP2, UTRN, DMD and DAG1. Detected in a complex composed of at least EZR, AHNAK, PPL and PRX. Identified in a complex with EZR, AHNAK, BFSP1, BFSP2, ANK2, PLEC, VIM and spectrin. As to expression, detected in eye lens (at protein level).

It localises to the nucleus. It is found in the cytoplasm. The protein localises to the cell membrane. Its subcellular location is the cell junction. The protein resides in the adherens junction. Its function is as follows. Scaffolding protein that functions as part of a dystroglycan complex in Schwann cells, and as part of EZR and AHNAK-containing complexes in eye lens fiber cells. Required for the maintenance of the peripheral myelin sheath that is essential for normal transmission of nerve impulses and normal perception of sensory stimuli. Required for normal transport of MBP mRNA from the perinuclear to the paranodal regions. Required for normal remyelination after nerve injury. Required for normal elongation of Schwann cells and normal length of the internodes between the nodes of Ranvier. The demyelinated nodes of Ranvier permit saltatory transmission of nerve impulses; shorter internodes cause slower transmission of nerve impulses. Required for the formation of appositions between the abaxonal surface of the myelin sheath and the Schwann cell plasma membrane; the Schwann cell cytoplasm is restricted to regions between these appositions. Required for the formation of Cajal bands and of Schmidt-Lanterman incisures that correspond to short, cytoplasm-filled regions on myelinated nerves. Recruits DRP2 to the Schwann cell plasma membrane. Required for normal protein composition of the eye lens fiber cell plasma membrane and normal eye lens fiber cell morphology. This Bos taurus (Bovine) protein is Periaxin (PRX).